A 273-amino-acid chain; its full sequence is Undecaprenyl-diphosphatase (273 aa).

7 helical membrane passes run 39–59, 86–106, 117–137, 146–166, 189–209, 220–240, and 249–269; these read SGLTFDVALHLGTFLALVVYF, LPFLVIASAVPAALVGKLFET, LLIGLFLILFGVGLGLADLFG, VTVSHALVIGLFQCLALIPGV, FSFLMSLPIVAGAALFKMLHL, LPLAAGIVSSAVTGYISVAFL, and IAPFVWYRLIAGGAVVSVILT.

It belongs to the UppP family.

The protein resides in the cell inner membrane. The catalysed reaction is di-trans,octa-cis-undecaprenyl diphosphate + H2O = di-trans,octa-cis-undecaprenyl phosphate + phosphate + H(+). In terms of biological role, catalyzes the dephosphorylation of undecaprenyl diphosphate (UPP). Confers resistance to bacitracin. The sequence is that of Undecaprenyl-diphosphatase from Pelobacter propionicus (strain DSM 2379 / NBRC 103807 / OttBd1).